The chain runs to 201 residues: Phospholipase A2 inhibitor PIP (201 aa).

An N-terminal signal peptide occupies residues 1 to 19; sequence MKSLQTICLLFIFIARGTS. Cystine bridges form between Cys-22–Cys-46, Cys-25–Cys-32, Cys-39–Cys-67, Cys-73–Cys-94, Cys-95–Cys-100, Cys-118–Cys-143, Cys-136–Cys-165, and Cys-169–Cys-191. A glycan (N-linked (GlcNAc...) asparagine) is linked at Asn-157.

As to quaternary structure, homohexamer. Glycosylated. In terms of tissue distribution, expressed by the liver.

It localises to the secreted. In terms of biological role, inhibits the enzymatic activity of phospholipase A2 (PA2). Binds to the major PLA2 toxin of D.russelli siamensis (Daboiatoxin, AC Q7T2R1, and AC Q7T3T5) at 1-2-fold molar excess of inhibitor to toxin. It exhibits broad spectra in neutralizing the toxicity of various snake venoms and toxins and inhibits the formation of edema in mice. May bind to PLA2 through its proline-rich hydrophobic core region. This is Phospholipase A2 inhibitor PIP from Malayopython reticulatus (Reticulate python).